Here is a 572-residue protein sequence, read N- to C-terminus: Proline--tRNA ligase (572 aa).

This sequence belongs to the class-II aminoacyl-tRNA synthetase family. ProS type 1 subfamily. As to quaternary structure, homodimer.

The protein resides in the cytoplasm. The catalysed reaction is tRNA(Pro) + L-proline + ATP = L-prolyl-tRNA(Pro) + AMP + diphosphate. In terms of biological role, catalyzes the attachment of proline to tRNA(Pro) in a two-step reaction: proline is first activated by ATP to form Pro-AMP and then transferred to the acceptor end of tRNA(Pro). As ProRS can inadvertently accommodate and process non-cognate amino acids such as alanine and cysteine, to avoid such errors it has two additional distinct editing activities against alanine. One activity is designated as 'pretransfer' editing and involves the tRNA(Pro)-independent hydrolysis of activated Ala-AMP. The other activity is designated 'posttransfer' editing and involves deacylation of mischarged Ala-tRNA(Pro). The misacylated Cys-tRNA(Pro) is not edited by ProRS. The chain is Proline--tRNA ligase from Salmonella dublin (strain CT_02021853).